A 444-amino-acid chain; its full sequence is Glutamyl-tRNA reductase (444 aa).

Substrate is bound by residues Thr-49–Arg-52, Ser-109, Glu-114–Gln-116, and Gln-120. The active-site Nucleophile is Cys-50. NADP(+) is bound at residue Gly-189–Gly-194.

This sequence belongs to the glutamyl-tRNA reductase family. Homodimer.

It carries out the reaction (S)-4-amino-5-oxopentanoate + tRNA(Glu) + NADP(+) = L-glutamyl-tRNA(Glu) + NADPH + H(+). It functions in the pathway porphyrin-containing compound metabolism; protoporphyrin-IX biosynthesis; 5-aminolevulinate from L-glutamyl-tRNA(Glu): step 1/2. In terms of biological role, catalyzes the NADPH-dependent reduction of glutamyl-tRNA(Glu) to glutamate 1-semialdehyde (GSA). The protein is Glutamyl-tRNA reductase of Bacillus cereus (strain ATCC 14579 / DSM 31 / CCUG 7414 / JCM 2152 / NBRC 15305 / NCIMB 9373 / NCTC 2599 / NRRL B-3711).